A 233-amino-acid chain; its full sequence is uncharacterized protein (233 aa).

A run of 3 helical transmembrane segments spans residues 4–24 (LAIL…NHDT), 35–55 (FGQL…ILQS), and 66–86 (IAIW…RFEL).

The protein localises to the cell membrane. This is an uncharacterized protein from Sinorhizobium sp.